A 76-amino-acid chain; its full sequence is MAIGTPAHEFRELNEEELVNRLNEAKEELFNLRFQLATGQLTNNRRLRTVKRDIARIYTVIRERELGLSVVPGAEA.

The protein belongs to the universal ribosomal protein uL29 family.

The protein is Large ribosomal subunit protein uL29 of Corynebacterium efficiens (strain DSM 44549 / YS-314 / AJ 12310 / JCM 11189 / NBRC 100395).